Reading from the N-terminus, the 681-residue chain is uncharacterized protein (681 aa).

It belongs to the protein kinase superfamily. ADCK protein kinase family.

This is an uncharacterized protein from Synechocystis sp. (strain ATCC 27184 / PCC 6803 / Kazusa).